A 546-amino-acid polypeptide reads, in one-letter code: Chaperonin GroEL (546 aa).

ATP is bound by residues 30–33, Lys-51, 87–91, Gly-415, 479–481, and Asp-495; these read TLGP, DGTTT, and NAA.

It belongs to the chaperonin (HSP60) family. Forms a cylinder of 14 subunits composed of two heptameric rings stacked back-to-back. Interacts with the co-chaperonin GroES.

Its subcellular location is the cytoplasm. It carries out the reaction ATP + H2O + a folded polypeptide = ADP + phosphate + an unfolded polypeptide.. Functionally, together with its co-chaperonin GroES, plays an essential role in assisting protein folding. The GroEL-GroES system forms a nano-cage that allows encapsulation of the non-native substrate proteins and provides a physical environment optimized to promote and accelerate protein folding. In Paraburkholderia phytofirmans (strain DSM 17436 / LMG 22146 / PsJN) (Burkholderia phytofirmans), this protein is Chaperonin GroEL.